Reading from the N-terminus, the 77-residue chain is Acyl carrier protein (77 aa).

The 76-residue stretch at 2–77 folds into the Carrier domain; it reads SDVADRVKKI…DAVKFISEAS (76 aa). O-(pantetheine 4'-phosphoryl)serine is present on S37.

It belongs to the acyl carrier protein (ACP) family. 4'-phosphopantetheine is transferred from CoA to a specific serine of apo-ACP by AcpS. This modification is essential for activity because fatty acids are bound in thioester linkage to the sulfhydryl of the prosthetic group.

The protein localises to the cytoplasm. The protein operates within lipid metabolism; fatty acid biosynthesis. Carrier of the growing fatty acid chain in fatty acid biosynthesis. In Ruegeria sp. (strain TM1040) (Silicibacter sp.), this protein is Acyl carrier protein.